The chain runs to 740 residues: Catalase-peroxidase 2 (740 aa).

A signal peptide spans 1–27; it reads MFKKTKPRISILALTISCAIYSGAALA. The segment at residues 106–228 is a cross-link (tryptophyl-tyrosyl-methioninium (Trp-Tyr) (with M-254)); that stretch reads WHSAGTYRIY…LAAVQMGLIY (123 aa). His-107 acts as the Proton acceptor in catalysis. Residues 228 to 254 constitute a cross-link (tryptophyl-tyrosyl-methioninium (Tyr-Met) (with W-106)); that stretch reads YVNPEGPNGVPDPLLAAKDIRDTFGRM. His-269 contributes to the heme b binding site.

This sequence belongs to the peroxidase family. Peroxidase/catalase subfamily. As to quaternary structure, homodimer or homotetramer. It depends on heme b as a cofactor. Post-translationally, formation of the three residue Trp-Tyr-Met cross-link is important for the catalase, but not the peroxidase activity of the enzyme.

The enzyme catalyses H2O2 + AH2 = A + 2 H2O. The catalysed reaction is 2 H2O2 = O2 + 2 H2O. Bifunctional enzyme with both catalase and broad-spectrum peroxidase activity. The chain is Catalase-peroxidase 2 from Cellvibrio japonicus (strain Ueda107) (Pseudomonas fluorescens subsp. cellulosa).